The primary structure comprises 271 residues: Mannosyl-3-phosphoglycerate phosphatase (271 aa).

Asp-13 acts as the Nucleophile in catalysis. 3 residues coordinate Mg(2+): Asp-13, Asp-15, and Asp-214.

Belongs to the HAD-like hydrolase superfamily. MPGP family. Requires Mg(2+) as cofactor.

It localises to the cytoplasm. It carries out the reaction 2-O-(alpha-D-mannosyl)-3-phosphoglycerate + H2O = (2R)-2-O-(alpha-D-mannosyl)-glycerate + phosphate. The chain is Mannosyl-3-phosphoglycerate phosphatase (yedP) from Escherichia coli O6:K15:H31 (strain 536 / UPEC).